A 208-amino-acid polypeptide reads, in one-letter code: Proheparin-binding EGF-like growth factor (208 aa).

The N-terminal stretch at 1 to 19 is a signal peptide; the sequence is MKLLPSVVLKLFLAAVLSA. Residues 20 to 62 constitute a propeptide, or 72, or 73, or 76, or 81; sequence LVTGESLERLRRGLAAGTSNPDPPTVSTDQLLPLGGGRDRKVR. The Extracellular portion of the chain corresponds to 20–160; that stretch reads LVTGESLERL…ENRLYTYDHT (141 aa). A disordered region spans residues 33-56; sequence LAAGTSNPDPPTVSTDQLLPLGGG. Positions 36–49 are enriched in polar residues; sequence GTSNPDPPTVSTDQ. O-linked (GalNAc...) threonine glycosylation occurs at threonine 37. An O-linked (GalNAc...) serine glycan is attached at serine 38. O-linked (GalNAc...) threonine glycosylation is found at threonine 44, threonine 47, threonine 75, and threonine 85. A disordered region spans residues 82–104; that stretch reads ALATPNKEEHGKRKKKGKGLGKK. The span at 93 to 102 shows a compositional bias: basic residues; sequence KRKKKGKGLG. The EGF-like domain maps to 104–144; it reads KRDPCLRKYKDFCIHGECKYVKELRAPSCICHPGYHGERCH. 3 disulfides stabilise this stretch: cysteine 108–cysteine 121, cysteine 116–cysteine 132, and cysteine 134–cysteine 143. Residues 149–208 constitute a propeptide, C-terminal; it reads PVENRLYTYDHTTILAVVAVVLSSVCLLVIVGLLMFRYHRRGGYDVENEEKVKLGMTNSH. A helical transmembrane segment spans residues 161-184; it reads TILAVVAVVLSSVCLLVIVGLLMF. The Cytoplasmic segment spans residues 185–208; sequence RYHRRGGYDVENEEKVKLGMTNSH.

Interacts with FBLN1. Interacts with EGFR and ERBB4. In terms of processing, several N-termini have been identified by direct sequencing. The forms with N-termini 63, 73 and 74 have been tested and found to be biologically active. O-glycosylated with core 1 or possibly core 8 glycans. Thr-47 is a minor glycosylation site compared to Thr-44.

It localises to the secreted. The protein localises to the extracellular space. It is found in the cell membrane. In terms of biological role, growth factor that mediates its effects via EGFR, ERBB2 and ERBB4. Required for normal cardiac valve formation and normal heart function. Promotes smooth muscle cell proliferation. May be involved in macrophage-mediated cellular proliferation. It is mitogenic for fibroblasts, but not endothelial cells. It is able to bind EGF receptor/EGFR with higher affinity than EGF itself and is a far more potent mitogen for smooth muscle cells than EGF. Also acts as a diphtheria toxin receptor. The protein is Proheparin-binding EGF-like growth factor (HBEGF) of Homo sapiens (Human).